Reading from the N-terminus, the 389-residue chain is Chalcone synthase 1 (389 aa).

The active site involves C163.

Belongs to the thiolase-like superfamily. Chalcone/stilbene synthases family.

The catalysed reaction is (E)-4-coumaroyl-CoA + 3 malonyl-CoA + 3 H(+) = 2',4,4',6'-tetrahydroxychalcone + 3 CO2 + 4 CoA. The protein operates within secondary metabolite biosynthesis; flavonoid biosynthesis. Functionally, the primary product of this enzyme is 4,2',4',6'-tetrahydroxychalcone (also termed naringenin-chalcone or chalcone) which can under specific conditions spontaneously isomerize into naringenin. The sequence is that of Chalcone synthase 1 (CHS1) from Citrus sinensis (Sweet orange).